A 185-amino-acid polypeptide reads, in one-letter code: Glycine-rich cell wall structural protein 2 (185 aa).

The N-terminal stretch at 1–27 is a signal peptide; the sequence is MATTKHLALAILVLLSIGMTTSARTLL. A disordered region spans residues 149–185; it reads GYGSGGGGGGGGGQGGGSGSGSGSGYGSGSGGGNGHH.

The protein resides in the secreted. Its subcellular location is the cell wall. In terms of biological role, responsible for plasticity of the cell wall. This is Glycine-rich cell wall structural protein 2 (GRP0.9) from Oryza sativa subsp. indica (Rice).